The chain runs to 283 residues: Shikimate dehydrogenase (NADP(+)) (283 aa).

Shikimate contacts are provided by residues 19 to 21 and Thr-66; that span reads SLS. Lys-70 functions as the Proton acceptor in the catalytic mechanism. Shikimate-binding residues include Asn-91 and Asp-106. NADP(+)-binding positions include 129–133, 153–158, and Leu-224; these read GAGGA and NRTPEK. Tyr-226 is a shikimate binding site. Gly-247 provides a ligand contact to NADP(+).

It belongs to the shikimate dehydrogenase family. In terms of assembly, homodimer.

It catalyses the reaction shikimate + NADP(+) = 3-dehydroshikimate + NADPH + H(+). The protein operates within metabolic intermediate biosynthesis; chorismate biosynthesis; chorismate from D-erythrose 4-phosphate and phosphoenolpyruvate: step 4/7. In terms of biological role, involved in the biosynthesis of the chorismate, which leads to the biosynthesis of aromatic amino acids. Catalyzes the reversible NADPH linked reduction of 3-dehydroshikimate (DHSA) to yield shikimate (SA). In Methanothermobacter thermautotrophicus (strain ATCC 29096 / DSM 1053 / JCM 10044 / NBRC 100330 / Delta H) (Methanobacterium thermoautotrophicum), this protein is Shikimate dehydrogenase (NADP(+)).